Consider the following 188-residue polypeptide: dCTP deaminase (188 aa).

DCTP contacts are provided by residues 111-116 (KSTYAR), 135-137 (TLE), Q156, Y170, K179, and Q180. The active-site Proton donor/acceptor is E137.

The protein belongs to the dCTP deaminase family. Homotrimer.

It catalyses the reaction dCTP + H2O + H(+) = dUTP + NH4(+). It participates in pyrimidine metabolism; dUMP biosynthesis; dUMP from dCTP (dUTP route): step 1/2. Catalyzes the deamination of dCTP to dUTP. This chain is dCTP deaminase, found in Rickettsia felis (strain ATCC VR-1525 / URRWXCal2) (Rickettsia azadi).